The following is a 479-amino-acid chain: Probable polyamine transporter At3g19553 (479 aa).

Transmembrane regions (helical) follow at residues 22-42 (LTLLPLVFLIFYEVSGGPFGV), 53-73 (LLALLGFLIFPLIWSIPEALV), 86-106 (GYVVWISSAFGPFWGFQEGFW), 130-150 (FPVLDHVAARVPALLVITFSL), 160-180 (IVGFSAVVLAVFSLCPFVVMA), 236-256 (ALFGAVLLVMGSYLIPLMAGT), 275-295 (VGMLIGGVWLKGWIQAAAAMS), 304-324 (MSSDAFQLLGMSEIGMLPAFF), 332-352 (TPTISILCSATGVIFLSWMSF), 355-375 (IIEFLNFLYALGMLLEFAAFV), 395-415 (FGVSMLCLPPSLLVILVMVLA), and 420-440 (FLISGVIIVLGFCLYPFLTLV). Positions 454 to 479 (RPVSGVSSESQLDEEHGDESAASLLP) are disordered.

It belongs to the amino acid-polyamine-organocation (APC) superfamily. Polyamine:cation symporter (PHS) (TC 2.A.3.12) family.

The protein resides in the cell membrane. In terms of biological role, probable cell membrane polyamine/proton symporter involved in the polyamine uptake in cells. This is Probable polyamine transporter At3g19553 from Arabidopsis thaliana (Mouse-ear cress).